Consider the following 188-residue polypeptide: Elongation factor P (188 aa).

Residue K34 is modified to N6-(3,6-diaminohexanoyl)-5-hydroxylysine.

Belongs to the elongation factor P family. May be beta-lysylated on the epsilon-amino group of Lys-34 by the combined action of EpmA and EpmB, and then hydroxylated on the C5 position of the same residue by EpmC (if this protein is present). Lysylation is critical for the stimulatory effect of EF-P on peptide-bond formation. The lysylation moiety may extend toward the peptidyltransferase center and stabilize the terminal 3-CCA end of the tRNA. Hydroxylation of the C5 position on Lys-34 may allow additional potential stabilizing hydrogen-bond interactions with the P-tRNA.

The protein localises to the cytoplasm. The protein operates within protein biosynthesis; polypeptide chain elongation. Involved in peptide bond synthesis. Alleviates ribosome stalling that occurs when 3 or more consecutive Pro residues or the sequence PPG is present in a protein, possibly by augmenting the peptidyl transferase activity of the ribosome. Modification of Lys-34 is required for alleviation. This Sodalis glossinidius (strain morsitans) protein is Elongation factor P.